Reading from the N-terminus, the 140-residue chain is Large ribosomal subunit protein uL14 (140 aa).

It belongs to the universal ribosomal protein uL14 family. In terms of assembly, part of the 50S ribosomal subunit. Forms a cluster with proteins L3 and L24e, part of which may contact the 16S rRNA in 2 intersubunit bridges.

Functionally, binds to 23S rRNA. Forms part of two intersubunit bridges in the 70S ribosome. This chain is Large ribosomal subunit protein uL14, found in Nitrosopumilus maritimus (strain SCM1).